The sequence spans 893 residues: Zinc finger protein 281 (893 aa).

Disordered regions lie at residues 1-113 (MKIG…FPSQ), 126-148 (IKQEKPADPEEQPSHHHHHHHHY), 153-172 (AGAEERSPGLGGGEGGSHGV), and 198-251 (SGSR…GAVL). Residue Lys2 forms a Glycyl lysine isopeptide (Lys-Gly) (interchain with G-Cter in SUMO2) linkage. The span at 7–36 (FLSGGGGPSSSGGSGSGGSSGSASGGSGGG) shows a compositional bias: gly residues. Glycyl lysine isopeptide (Lys-Gly) (interchain with G-Cter in SUMO2) cross-links involve residues Lys100 and Lys127. The segment covering 127 to 139 (KQEKPADPEEQPS) has biased composition (basic and acidic residues). Residues 161–170 (GLGGGEGGSH) show a composition bias toward gly residues. Positions 201-216 (RTDEHGNQEPKQDANV) are enriched in basic and acidic residues. Residues Lys211, Lys217, Lys223, Lys230, Lys240, and Lys256 each participate in a glycyl lysine isopeptide (Lys-Gly) (interchain with G-Cter in SUMO2) cross-link. 3 C2H2-type zinc fingers span residues 258 to 280 (HICDHCSAAFRSSYHLRRHVLIH), 286 to 308 (FQCSQCSMGFIQKYLLQRHEKIH), and 314 to 336 (FGCDQCSMKFIQKYHMERHKRTH). Residues Lys298 and Lys322 each participate in a glycyl lysine isopeptide (Lys-Gly) (interchain with G-Cter in SUMO2) cross-link. Residues 342–364 (YKCDTCQQYFSRTDRLLKHRRTC) form a C2H2-type 4; atypical zinc finger. A Glycyl lysine isopeptide (Lys-Gly) (interchain with G-Cter in SUMO2) cross-link involves residue Lys370. Residues 371–425 (GAASAEPGSSNHNSMGNLAVLSQGNTSSSRRKSKSKSIAIENKEHKTGKTNESQM) are disordered. Residues 377–396 (PGSSNHNSMGNLAVLSQGNT) are compositionally biased toward polar residues. A Phosphoserine modification is found at Ser392. Glycyl lysine isopeptide (Lys-Gly) (interchain with G-Cter in SUMO2) cross-links involve residues Lys406, Lys413, Lys457, and Lys474. Ser481 is subject to Phosphoserine. Residues Lys490, Lys495, Lys536, Lys596, Lys614, and Lys619 each participate in a glycyl lysine isopeptide (Lys-Gly) (interchain with G-Cter in SUMO2) cross-link. Positions 613 to 658 (GKSETQKEDPFNLTEPRVDLHTSGEHSELVQEENLSPGTQTPSNDK) are disordered. Residues 616-641 (ETQKEDPFNLTEPRVDLHTSGEHSEL) are compositionally biased toward basic and acidic residues. The span at 645-658 (ENLSPGTQTPSNDK) shows a compositional bias: polar residues. Ser648 carries the post-translational modification Phosphoserine. Residues Lys658 and Lys667 each participate in a glycyl lysine isopeptide (Lys-Gly) (interchain with G-Cter in SUMO2) cross-link. Residues 775-813 (SSAFQSSSQKLTSQKEQQKNLESSTSFQIPSQELASQID) show a composition bias toward polar residues. The tract at residues 775–815 (SSAFQSSSQKLTSQKEQQKNLESSTSFQIPSQELASQIDPQ) is disordered. Ser782 is subject to Phosphoserine. Glycyl lysine isopeptide (Lys-Gly) (interchain with G-Cter in SUMO2) cross-links involve residues Lys784, Lys789, and Lys793. Ser805 is subject to Phosphoserine. Residues Lys816 and Lys838 each participate in a glycyl lysine isopeptide (Lys-Gly) (interchain with G-Cter in SUMO2) cross-link. Position 886 is a phosphothreonine (Thr886).

It belongs to the krueppel C2H2-type zinc-finger protein family. As to quaternary structure, interacts with NANOG. Associates with the NuRD complex.

The protein resides in the nucleus. Functionally, transcription repressor that plays a role in regulation of embryonic stem cells (ESCs) differentiation. Required for ESCs differentiation and acts by mediating autorepression of NANOG in ESCs: binds to the NANOG promoter and promotes association of NANOG protein to its own promoter and recruits the NuRD complex, which deacetylates histones. Not required for establishement and maintenance of ESCs. Represses the transcription of a number of genes including GAST, ODC1 and VIM. Binds to the G-rich box in the enhancer region of these genes. The chain is Zinc finger protein 281 (Znf281) from Mus musculus (Mouse).